We begin with the raw amino-acid sequence, 1024 residues long: Error-prone DNA polymerase (1024 aa).

It belongs to the DNA polymerase type-C family. DnaE2 subfamily.

The protein resides in the cytoplasm. It catalyses the reaction DNA(n) + a 2'-deoxyribonucleoside 5'-triphosphate = DNA(n+1) + diphosphate. DNA polymerase involved in damage-induced mutagenesis and translesion synthesis (TLS). It is not the major replicative DNA polymerase. This chain is Error-prone DNA polymerase, found in Vibrio parahaemolyticus serotype O3:K6 (strain RIMD 2210633).